The sequence spans 1600 residues: THO complex subunit 2 (1600 aa).

Residues 1–163 (MAAAAVVVPA…KLFYKQQKFN (163 aa)) form an anchor domain; interaction with THOC5 and THOC7 region. The bow domain; interaction with THOC1 dock domain and THOC3 stretch occupies residues 164–534 (LLREENEGYA…GQWKNETYNS (371 aa)). Residues 293–339 (NCIMDEHKREIAEAKQIVRKLTMVVLSSEKMDDREKEKEKEEEKVEK) are a coiled coil. The segment at 321–341 (EKMDDREKEKEKEEEKVEKPP) is disordered. The segment at 535–686 (HPLLVKVKAQ…LILKEVVQKM (152 aa)) is MIF4G domain; interaction with THOC3 and DDX39B. The stern domain stretch occupies residues 687-1174 (AGIEITEEMT…LAMGYSGQLK (488 aa)). The stretch at 896 to 965 (HTSYEREVNK…LKLEKDNWLL (70 aa)) forms a coiled coil. The Nuclear localization signal signature appears at 923 to 928 (KKKKEK). Positions 1175 to 1597 (SRKSYMIPEN…FHLDVFSQYN (423 aa)) are charged domain. Positions 1184–1600 (NEFHHKDPSP…DVFSQYNGKL (417 aa)) are disordered. Residues 1208 to 1217 (PSPSSTGSTS) are compositionally biased toward low complexity. Positions 1218 to 1234 (KSDESSAEETDKSRERS) are enriched in basic and acidic residues. Serine 1222 is subject to Phosphoserine. Positions 1251–1263 (GNSSNGNSGSNSN) are enriched in low complexity. 3 stretches are compositionally biased toward basic and acidic residues: residues 1265 to 1285 (AVKENDKEKGKEKEKEKKEKT), 1294 to 1343 (ILGK…EKFK), and 1353 to 1383 (SSQEREREKEPSRERDIAKEMKSKENVKGGE). The residue at position 1385 (threonine 1385) is a Phosphothreonine. Phosphoserine is present on residues serine 1390, serine 1393, and serine 1417. Residues 1416 to 1425 (PSPSHSSTVK) are compositionally biased toward polar residues. Threonine 1443 carries the phosphothreonine modification. Residues 1449–1504 (KSKEREMDKKDLDKSRERSREREKKDEKDRKERKRDHSNSDREVPPDLTKRRKEEN) are compositionally biased toward basic and acidic residues. Serine 1450, serine 1486, and serine 1516 each carry phosphoserine. Positions 1464–1491 (RERSREREKKDEKDRKERKRDHSNSDRE) form a coiled coil. Over residues 1524-1585 (NEKDKEKNKS…SSGGKEEKKQ (62 aa)) the composition is skewed to basic and acidic residues.

The protein belongs to the THOC2 family. In terms of assembly, component of the THO subcomplex, which is composed of THOC1, THOC2, THOC3, THOC5, THOC6 and THOC7. The THO subcomplex interacts with DDX39B to form the THO-DDX39B complex which multimerizes into a 28-subunit tetrameric assembly. Component of the transcription/export (TREX) complex at least composed of ALYREF/THOC4, DDX39B, SARNP/CIP29, CHTOP and the THO subcomplex; in the complex interacts with THOC1, THOC3, THOC5, THOC7 and DDX39B. TREX seems to have a dynamic structure involving ATP-dependent remodeling. Interacts with POLDIP3 and ZC3H11A.

The protein resides in the nucleus. It localises to the nucleus speckle. It is found in the cytoplasm. Its function is as follows. Component of the THO subcomplex of the TREX complex which is thought to couple mRNA transcription, processing and nuclear export, and which specifically associates with spliced mRNA and not with unspliced pre-mRNA. Required for efficient export of polyadenylated RNA and spliced mRNA. The THOC1-THOC2-THOC3 core complex alone is sufficient to bind export factor NXF1-NXT1 and promote ATPase activity of DDX39B; in the complex THOC2 is the only component that directly interacts with DDX39B. TREX is recruited to spliced mRNAs by a transcription-independent mechanism, binds to mRNA upstream of the exon-junction complex (EJC) and is recruited in a splicing- and cap-dependent manner to a region near the 5' end of the mRNA where it functions in mRNA export to the cytoplasm via the TAP/NXF1 pathway. Required for NXF1 localization to the nuclear rim. THOC2 (and probably the THO complex) is involved in releasing mRNA from nuclear speckle domains. Plays a role for proper neuronal development. The chain is THO complex subunit 2 (THOC2) from Plecturocebus moloch (Dusky titi monkey).